Consider the following 188-residue polypeptide: F-box only protein 36 (188 aa).

Residues 91-137 (FDYLERLSDRLLLKIICYLDLEDIASLSQTSSKFEKLCKSDLLWEQI) form the F-box domain.

As to quaternary structure, directly interacts with SKP1 and CUL1.

Its function is as follows. Substrate-recognition component of the SCF (SKP1-CUL1-F-box protein)-type E3 ubiquitin ligase complex. The polypeptide is F-box only protein 36 (Fbxo36) (Mus musculus (Mouse)).